Here is a 710-residue protein sequence, read N- to C-terminus: Dynein axonemal assembly factor 3 homolog (710 aa).

Residues 403–487 (GAEAGAGAGP…DSDPAAAAST (85 aa)) form a disordered region. Residues 404-416 (AEAGAGAGPGGEA) show a composition bias toward gly residues. Low complexity predominate over residues 417–438 (AAGASSSSGKEEAAAAAAAGKE). The segment covering 453 to 462 (SGSGAPGAGT) has biased composition (gly residues). The segment covering 478–487 (DSDPAAAAST) has biased composition (low complexity).

It belongs to the DNAAF3 family.

It localises to the cytoplasm. Required for the assembly of axonemal inner and outer dynein arms. Involved in preassembly of dyneins into complexes before their transport into cilia. The polypeptide is Dynein axonemal assembly factor 3 homolog (DAB1) (Chlamydomonas reinhardtii (Chlamydomonas smithii)).